We begin with the raw amino-acid sequence, 330 residues long: D-lactate dehydrogenase (330 aa).

NAD(+)-binding positions include 155–156 (RI), D175, 206–207 (MP), N212, 233–235 (MAR), and D259. R235 is an active-site residue. Residue E264 is part of the active site. Residue H296 is the Proton donor of the active site.

It belongs to the D-isomer specific 2-hydroxyacid dehydrogenase family.

The enzyme catalyses (R)-lactate + NAD(+) = pyruvate + NADH + H(+). This is D-lactate dehydrogenase (ldhD) from Streptococcus pyogenes serotype M1.